We begin with the raw amino-acid sequence, 310 residues long: Olfactory receptor 5H14 (310 aa).

Residues Met-1–Phe-28 lie on the Extracellular side of the membrane. A glycan (N-linked (GlcNAc...) asparagine) is linked at Asn-5. The helical transmembrane segment at Leu-29 to Ile-49 threads the bilayer. Residues Trp-50–His-56 are Cytoplasmic-facing. The helical transmembrane segment at Ile-57–Val-77 threads the bilayer. Topologically, residues Thr-78–Lys-98 are extracellular. Residues Cys-97 and Cys-179 are joined by a disulfide bond. Residues Ile-99–Ala-119 traverse the membrane as a helical segment. The Cytoplasmic portion of the chain corresponds to Tyr-120–Arg-143. A helical transmembrane segment spans residues Leu-144–Phe-164. The Extracellular portion of the chain corresponds to Arg-165 to Asn-195. Residues Phe-196–Ile-216 form a helical membrane-spanning segment. At Ser-217 to Thr-240 the chain is on the cytoplasmic side. Residues Cys-241–Gly-261 form a helical membrane-spanning segment. The Extracellular segment spans residues Ser-262–Asp-271. Residues Met-272–Leu-292 traverse the membrane as a helical segment. The Cytoplasmic portion of the chain corresponds to Arg-293–Val-310.

The protein belongs to the G-protein coupled receptor 1 family.

It localises to the cell membrane. Functionally, odorant receptor. The protein is Olfactory receptor 5H14 (OR5H14) of Homo sapiens (Human).